The sequence spans 140 residues: uncharacterized protein (140 aa).

Residues Pro-34–Ser-88 are disordered.

In terms of tissue distribution, expressed in a range of cell lines, including B-cell lymphoma and prostate.

This is an uncharacterized protein from Homo sapiens (Human).